A 201-amino-acid polypeptide reads, in one-letter code: Receptor expression-enhancing protein 6 (201 aa).

3 helical membrane-spanning segments follow: residues 36-56 (LAAG…GASL), 89-109 (WVVY…LFWF), and 117-137 (CAFL…LLYH).

The protein belongs to the DP1 family. Interacts with STX3. Interacts with clathrin. In terms of tissue distribution, expressed in the inner segment of rod photoreceptors and outer plexiform layer of the retina (at protein level). Expressed in liver, but not detected in brain, muscle, kidney, retinal cone photoreceptors or retinal ganglion cells (at protein level). Highly expressed in the ganglion cell layer of the retina and in liver, and also detected at low levels in kidney and testis. Isoform 1: Expressed in the retina. Isoform 2: Expressed in liver.

It localises to the endoplasmic reticulum membrane. The protein resides in the cytoplasmic vesicle. Its subcellular location is the clathrin-coated vesicle membrane. Its function is as follows. Required for correct function and survival of retinal photoreceptors. Required for retinal development. In rod photoreceptors, facilitates stability and/or trafficking of guanylate cyclases and is required to maintain endoplasmic reticulum and mitochondrial homeostasis. May play a role in clathrin-coated intracellular vesicle trafficking of proteins from the endoplasmic reticulum to the retinal rod plasma membrane. The sequence is that of Receptor expression-enhancing protein 6 (Reep6) from Mus musculus (Mouse).